Consider the following 263-residue polypeptide: Protein TILLER ANGLE CONTROL 1 (263 aa).

An IGT motif motif is present at residues 55-61 (GILAIGT). The interval 243–263 (GKKIHPEQLNGRSNAEGPLTA) is disordered.

This sequence belongs to the TAC family. Highly expressed in leaf sheath pulvinus. Expressed in shoot apical meristem and leaves.

Involved in the regulation of leaf growth angle. Promotes horizontal shoot growth. The protein is Protein TILLER ANGLE CONTROL 1 of Zea mays (Maize).